A 389-amino-acid polypeptide reads, in one-letter code: Methionyl-tRNA formyltransferase, mitochondrial (389 aa).

This sequence belongs to the Fmt family.

The protein localises to the mitochondrion. It carries out the reaction L-methionyl-tRNA(fMet) + (6R)-10-formyltetrahydrofolate = N-formyl-L-methionyl-tRNA(fMet) + (6S)-5,6,7,8-tetrahydrofolate + H(+). Methionyl-tRNA formyltransferase that formylates methionyl-tRNA in mitochondria and is crucial for translation initiation. In Homo sapiens (Human), this protein is Methionyl-tRNA formyltransferase, mitochondrial (MTFMT).